A 71-amino-acid polypeptide reads, in one-letter code: Disintegrin viridin (71 aa).

The region spanning 1-71 (AGEECDCGSP…SADCPRNRFH (71 aa)) is the Disintegrin domain. Cystine bridges form between Cys5-Cys20, Cys7-Cys15, Cys14-Cys37, Cys28-Cys34, Cys33-Cys58, and Cys46-Cys65. The Cell attachment site motif lies at 50-52 (RGD). A disordered region spans residues 50–71 (RGDNPDDRCTGQSADCPRNRFH).

The protein belongs to the venom metalloproteinase (M12B) family. P-II subfamily. P-IIa sub-subfamily. Monomer (disintegrin). In terms of tissue distribution, expressed by the venom gland.

Its subcellular location is the secreted. In terms of biological role, inhibits fibrinogen interaction with platelets. Acts by binding to alpha-IIb/beta-3 (ITGA2B/ITGB3) on the platelet surface and inhibits aggregation induced by ADP, thrombin, platelet-activating factor and collagen. This Crotalus viridis viridis (Prairie rattlesnake) protein is Disintegrin viridin.